The chain runs to 154 residues: UPF0178 protein BAV3236 (154 aa).

The protein belongs to the UPF0178 family.

The chain is UPF0178 protein BAV3236 from Bordetella avium (strain 197N).